The sequence spans 305 residues: Dihydroorotate dehydrogenase A (fumarate) (305 aa).

Residues serine 21 and 45 to 46 (KS) contribute to the FMN site. Residues lysine 45, 69-73 (NAIGL), and asparagine 129 contribute to the substrate site. Asparagine 129 contributes to the FMN binding site. Residue cysteine 132 is the Nucleophile of the active site. FMN contacts are provided by lysine 167 and isoleucine 193. 194–195 (NT) provides a ligand contact to substrate. Residues glycine 219 and 245–246 (GG) each bind FMN.

Belongs to the dihydroorotate dehydrogenase family. Type 1 subfamily. In terms of assembly, homodimer. It depends on FMN as a cofactor.

Its subcellular location is the cytoplasm. It catalyses the reaction (S)-dihydroorotate + fumarate = orotate + succinate. The protein operates within pyrimidine metabolism; UMP biosynthesis via de novo pathway. Its function is as follows. Catalyzes the conversion of dihydroorotate to orotate with fumarate as the electron acceptor. This is Dihydroorotate dehydrogenase A (fumarate) (pyrD) from Lactiplantibacillus plantarum (strain ATCC BAA-793 / NCIMB 8826 / WCFS1) (Lactobacillus plantarum).